An 89-amino-acid polypeptide reads, in one-letter code: MAMNKLNFLLLLAVCVSAFSVVMQQNQYRLNFTALDKAKKQEIALEQDYAQMRLQQARLANHEAIRAAAEKQNLHPPVSGNTFMVEHQR.

The Cytoplasmic portion of the chain corresponds to 1–6 (MAMNKL). Residues 7–24 (NFLLLLAVCVSAFSVVMQ) form a helical membrane-spanning segment. Residues 25 to 89 (QNQYRLNFTA…GNTFMVEHQR (65 aa)) are Periplasmic-facing. Residues 33–73 (TALDKAKKQEIALEQDYAQMRLQQARLANHEAIRAAAEKQN) are a coiled coil.

Belongs to the FtsL family. As to quaternary structure, part of a complex composed of FtsB, FtsL and FtsQ.

The protein resides in the cell inner membrane. Functionally, essential cell division protein. May link together the upstream cell division proteins, which are predominantly cytoplasmic, with the downstream cell division proteins, which are predominantly periplasmic. This is Cell division protein FtsL from Neisseria meningitidis serogroup B (strain ATCC BAA-335 / MC58).